The chain runs to 241 residues: MTESNDTPIQTEEGDERQHRRIKSFVMRAGRMTEGQQRGLDQGAPKFVLPLADAPVDFDQVFGRSAPRSLEIGFGMGHSLLEMAAAAPEQDFIGVEVHRPGVGALLNGVLTQGLTNLRVYDCDAIEVLNRCIADNSLDRLMLFFPDPWHKSRHHKRRIVQASFAELVRSKLKVGGILHMATDWEPYAEYMLEVMNVAPGYRNLAEDGKCVPRPAERPITKFERRGERLGHGVWDLKFEKLA.

Residues 1-10 (MTESNDTPIQ) are compositionally biased toward polar residues. The segment at 1-20 (MTESNDTPIQTEEGDERQHR) is disordered. Residues Glu-71, Glu-96, Asp-123, and Asp-146 each coordinate S-adenosyl-L-methionine. The active site involves Asp-146. Substrate is bound by residues Lys-150, Asp-182, and 219 to 222 (TKFE).

This sequence belongs to the class I-like SAM-binding methyltransferase superfamily. TrmB family.

The enzyme catalyses guanosine(46) in tRNA + S-adenosyl-L-methionine = N(7)-methylguanosine(46) in tRNA + S-adenosyl-L-homocysteine. Its pathway is tRNA modification; N(7)-methylguanine-tRNA biosynthesis. Catalyzes the formation of N(7)-methylguanine at position 46 (m7G46) in tRNA. This chain is tRNA (guanine-N(7)-)-methyltransferase, found in Pseudomonas fluorescens (strain Pf0-1).